Consider the following 360-residue polypeptide: Ribosomal RNA small subunit methyltransferase C (360 aa).

Belongs to the methyltransferase superfamily. RsmC family. Monomer.

It is found in the cytoplasm. The catalysed reaction is guanosine(1207) in 16S rRNA + S-adenosyl-L-methionine = N(2)-methylguanosine(1207) in 16S rRNA + S-adenosyl-L-homocysteine + H(+). In terms of biological role, specifically methylates the guanine in position 1207 of 16S rRNA in the 30S particle. This Alteromonas mediterranea (strain DSM 17117 / CIP 110805 / LMG 28347 / Deep ecotype) protein is Ribosomal RNA small subunit methyltransferase C.